Reading from the N-terminus, the 430-residue chain is SH3 domain-containing protein PJ696.02 (430 aa).

The interval 237-372 (EPEDIWGPSS…KPKFKQDSLG (136 aa)) is disordered. Basic and acidic residues predominate over residues 263 to 277 (RRGDSYRSNRSRAHD). A Phosphoserine modification is found at Ser-285. Residues 304-313 (SKMDNRRSKY) are compositionally biased toward basic and acidic residues. At Thr-316 the chain carries Phosphothreonine. Residues Ser-318 and Ser-324 each carry the phosphoserine modification. Residue Tyr-325 is modified to Phosphotyrosine. A phosphoserine mark is found at Ser-326, Ser-354, and Ser-406. The segment covering 333-358 (VYSSDVSTESSSQFSSRSSEYSKPSR) has biased composition (low complexity). One can recognise an SH3 domain in the interval 371–430 (LGPNQARAMYSFAGEQPGDLSFQKGDIIDIVERSGSHDDWWTGRIGYREGIFPANYVKLS).

Belongs to the SH3YL1 family.

The chain is SH3 domain-containing protein PJ696.02 from Schizosaccharomyces pombe (strain 972 / ATCC 24843) (Fission yeast).